Here is a 139-residue protein sequence, read N- to C-terminus: Cytochrome c2 (139 aa).

Residues Met-1–Ala-25 form the signal peptide. Gln-26 carries the pyrrolidone carboxylic acid modification. Heme c-binding residues include Cys-38, Cys-41, His-42, and Met-118.

The protein belongs to the cytochrome c family. Post-translationally, binds 1 heme c group covalently per subunit.

Its function is as follows. Cytochrome c2 is found mainly in purple, non-sulfur, photosynthetic bacteria where it functions as the electron donor to the oxidized bacteriochlorophyll in the photophosphorylation pathway. However, it may also have a role in the respiratory chain and is found in some non-photosynthetic bacteria. The sequence is that of Cytochrome c2 (cycA) from Rhodopseudomonas palustris (strain ATCC BAA-98 / CGA009).